The chain runs to 376 residues: Enoyl-[acyl-carrier-protein] reductase, mitochondrial (376 aa).

Y72 (proton donor) is an active-site residue. Residues N154, 182-185, 205-207, 280-283, 305-307, and K369 each bind NADP(+); these read TSAV, RDR, YGGM, and YWI.

The protein belongs to the zinc-containing alcohol dehydrogenase family. Quinone oxidoreductase subfamily. As to quaternary structure, homodimer.

The protein resides in the mitochondrion matrix. The catalysed reaction is a 2,3-saturated acyl-[ACP] + NADP(+) = a (2E)-enoyl-[ACP] + NADPH + H(+). Catalyzes the NADPH-dependent reduction of trans-2-enoyl thioesters in mitochondrial fatty acid synthesis (fatty acid synthesis type II). Fatty acid chain elongation in mitochondria uses acyl carrier protein (ACP) as an acyl group carrier, but the enzyme accepts both ACP and CoA thioesters as substrates in vitro. Required for respiration and the maintenance of the mitochondrial compartment. The sequence is that of Enoyl-[acyl-carrier-protein] reductase, mitochondrial (ETR1) from Eremothecium gossypii (strain ATCC 10895 / CBS 109.51 / FGSC 9923 / NRRL Y-1056) (Yeast).